The primary structure comprises 255 residues: Small ribosomal subunit protein eS1 (255 aa).

N-acetylalanine; partial is present on alanine 2.

Belongs to the eukaryotic ribosomal protein eS1 family. In terms of assembly, component of the small ribosomal subunit. Mature ribosomes consist of a small (40S) and a large (60S) subunit. The 40S subunit contains about 33 different proteins and 1 molecule of RNA (18S). The 60S subunit contains about 49 different proteins and 3 molecules of RNA (25S, 5.8S and 5S).

The protein localises to the cytoplasm. The protein is Small ribosomal subunit protein eS1 of Candida glabrata (strain ATCC 2001 / BCRC 20586 / JCM 3761 / NBRC 0622 / NRRL Y-65 / CBS 138) (Yeast).